A 391-amino-acid polypeptide reads, in one-letter code: Processive diacylglycerol beta-glucosyltransferase (391 aa).

The protein belongs to the glycosyltransferase 28 family. UgtP subfamily.

It localises to the cell membrane. It carries out the reaction a 1,2-diacyl-3-O-(beta-D-glucopyranosyl)-sn-glycerol + UDP-alpha-D-glucose = a 1,2-diacyl-3-O-(beta-D-Glc-(1-&gt;6)-beta-D-Glc)-sn-glycerol + UDP + H(+). It catalyses the reaction a 1,2-diacyl-sn-glycerol + UDP-alpha-D-glucose = a 1,2-diacyl-3-O-(beta-D-glucopyranosyl)-sn-glycerol + UDP + H(+). It functions in the pathway glycolipid metabolism; diglucosyl-diacylglycerol biosynthesis. Processive glucosyltransferase involved in the biosynthesis of both the bilayer- and non-bilayer-forming membrane glucolipids. Is able to successively transfer two glucosyl residues to diacylglycerol (DAG), thereby catalyzing the formation of beta-monoglucosyl-DAG (3-O-(beta-D-glucopyranosyl)-1,2-diacyl-sn-glycerol) and beta-diglucosyl-DAG (3-O-(beta-D-glucopyranosyl-beta-(1-&gt;6)-D-glucopyranosyl)-1,2-diacyl-sn-glycerol). Beta-diglucosyl-DAG is the predominant glycolipid found in Bacillales and is also used as a membrane anchor for lipoteichoic acid (LTA). This chain is Processive diacylglycerol beta-glucosyltransferase, found in Staphylococcus aureus (strain bovine RF122 / ET3-1).